Here is a 198-residue protein sequence, read N- to C-terminus: Na(+)-translocating NADH-quinone reductase subunit E (198 aa).

6 helical membrane passes run 11–31 (SIFIENLALSFFLGMCTFLAV), 40–60 (GLGIAVVVVQAIAVPANNLVF), 77–97 (FLGFITYIGVIAALVQILEMF), 110–130 (GIFLPLITVNCAIFGGVSFMV), 140–160 (VVYGVGSGISWALAIVLMAAI), and 176–196 (LGITFITAGLMALGFMSFSGI).

This sequence belongs to the NqrDE/RnfAE family. As to quaternary structure, composed of six subunits; NqrA, NqrB, NqrC, NqrD, NqrE and NqrF.

Its subcellular location is the cell inner membrane. The enzyme catalyses a ubiquinone + n Na(+)(in) + NADH + H(+) = a ubiquinol + n Na(+)(out) + NAD(+). NQR complex catalyzes the reduction of ubiquinone-1 to ubiquinol by two successive reactions, coupled with the transport of Na(+) ions from the cytoplasm to the periplasm. NqrA to NqrE are probably involved in the second step, the conversion of ubisemiquinone to ubiquinol. This Tolumonas auensis (strain DSM 9187 / NBRC 110442 / TA 4) protein is Na(+)-translocating NADH-quinone reductase subunit E.